A 297-amino-acid polypeptide reads, in one-letter code: Cell death peptidase (297 aa).

The next 2 helical transmembrane spans lie at 61–82 (IVLT…WVFT) and 149–178 (IFLC…AFST).

This sequence belongs to the peptidase U49 family.

The protein resides in the cell membrane. Interacts with a short DNA sequence about one-quarter of the way into the major capsid protein gene 23 of T4; general translation inhibition occurs when this late gene of the virus is expressed. In Escherichia coli (strain K12), this protein is Cell death peptidase (lit).